Consider the following 391-residue polypeptide: Elongation factor Tu (391 aa).

Positions 10–201 constitute a tr-type G domain; sequence KPHVNIGTIG…AVDEFIPTPE (192 aa). A G1 region spans residues 19-26; that stretch reads GHVDHGKT. 19 to 26 is a binding site for GTP; that stretch reads GHVDHGKT. Mg(2+) is bound at residue Thr-26. The segment at 55-59 is G2; that stretch reads GITIS. Residues 76–79 form a G3 region; it reads DCPG. Residues 76–80 and 131–134 contribute to the GTP site; these read DCPGH and NKVD. Residues 131-134 are G4; the sequence is NKVD. The interval 169–171 is G5; it reads SAL.

This sequence belongs to the TRAFAC class translation factor GTPase superfamily. Classic translation factor GTPase family. EF-Tu/EF-1A subfamily. Monomer.

The protein resides in the cytoplasm. It catalyses the reaction GTP + H2O = GDP + phosphate + H(+). GTP hydrolase that promotes the GTP-dependent binding of aminoacyl-tRNA to the A-site of ribosomes during protein biosynthesis. The polypeptide is Elongation factor Tu (Roseobacter denitrificans (strain ATCC 33942 / OCh 114) (Erythrobacter sp. (strain OCh 114))).